A 71-amino-acid polypeptide reads, in one-letter code: Large ribosomal subunit protein bL31 (71 aa).

Zn(2+) is bound by residues Cys-16, Cys-18, Cys-37, and Cys-40.

This sequence belongs to the bacterial ribosomal protein bL31 family. Type A subfamily. Part of the 50S ribosomal subunit. Zn(2+) serves as cofactor.

In terms of biological role, binds the 23S rRNA. The sequence is that of Large ribosomal subunit protein bL31 from Solidesulfovibrio magneticus (strain ATCC 700980 / DSM 13731 / RS-1) (Desulfovibrio magneticus).